Here is an 87-residue protein sequence, read N- to C-terminus: Small ribosomal subunit protein bS20 (87 aa).

A disordered region spans residues 1-25 (MANTAQARKRARQSVQRNKHNSSLR). Residues 7 to 22 (ARKRARQSVQRNKHNS) show a composition bias toward basic residues.

This sequence belongs to the bacterial ribosomal protein bS20 family.

In terms of biological role, binds directly to 16S ribosomal RNA. The chain is Small ribosomal subunit protein bS20 from Bordetella bronchiseptica (strain ATCC BAA-588 / NCTC 13252 / RB50) (Alcaligenes bronchisepticus).